A 409-amino-acid chain; its full sequence is 23S rRNA (uracil(747)-C(5))-methyltransferase (409 aa).

4 residues coordinate [4Fe-4S] cluster: cysteine 61, cysteine 67, cysteine 70, and cysteine 137. Glutamine 251, tyrosine 277, glutamate 298, and aspartate 339 together coordinate S-adenosyl-L-methionine. The Nucleophile role is filled by cysteine 365.

It belongs to the class I-like SAM-binding methyltransferase superfamily. RNA M5U methyltransferase family.

The enzyme catalyses uridine(747) in 23S rRNA + S-adenosyl-L-methionine = 5-methyluridine(747) in 23S rRNA + S-adenosyl-L-homocysteine + H(+). Catalyzes the formation of 5-methyl-uridine at position equivalent to 747 (m5U747) in 23S rRNA. In Pyrococcus furiosus (strain ATCC 43587 / DSM 3638 / JCM 8422 / Vc1), this protein is 23S rRNA (uracil(747)-C(5))-methyltransferase.